The sequence spans 510 residues: Aromatic-L-amino-acid decarboxylase (510 aa).

Residues 1–17 (MSHIPISNTIPPKQTDG) are compositionally biased toward polar residues. A disordered region spans residues 1–29 (MSHIPISNTIPPKQTDGNGKANISPDKLD). Substrate is bound at residue Thr-117. Ala-183, Ser-184, His-227, Asp-305, and Asn-334 together coordinate pyridoxal 5'-phosphate. Residue His-227 coordinates substrate. Position 337 is an N6-(pyridoxal phosphate)lysine (Lys-337). Positions 358 to 384 (NAFNVDPLYLKHDMQGSAPDYRHWQIP) are disordered.

Belongs to the group II decarboxylase family. In terms of assembly, homodimer. The cofactor is pyridoxal 5'-phosphate.

The catalysed reaction is L-dopa + H(+) = dopamine + CO2. It catalyses the reaction 5-hydroxy-L-tryptophan + H(+) = serotonin + CO2. In terms of biological role, catalyzes the decarboxylation of L-3,4-dihydroxyphenylalanine (L-DOPA) to dopamine and L-5-hydroxytryptophan (5-HTP) to serotonin. Catalyzes the formation of serotonin more efficiently than dopamine. Displays no activity to tyrosine. Variation in the synthesis of bioamines may be a factor contributing to natural variation in life span. In Drosophila simulans (Fruit fly), this protein is Aromatic-L-amino-acid decarboxylase (Ddc).